Here is a 399-residue protein sequence, read N- to C-terminus: Dof zinc finger protein DOF5.1 (399 aa).

Residues 95–149 (LKCPRCDSTNTKFCYFNNYSLTQPRHFCKACRRYWTRGGALRSVPVGGGCRRNKR) form a Dof-type zinc finger. Zn(2+) contacts are provided by Cys97, Cys100, Cys122, and Cys125. The disordered stretch occupies residues 139 to 176 (PVGGGCRRNKRTKNSSGGGGGSTSSGNSKSQDSATSND).

As to expression, expressed ubiquitously, especially in the vascular tissues, except in seeds, petals and anthers. Specific to the vascular tissues in young leaves, cotyledons and flower buds. The PEAR proteins (e.g. DOF2.4, DOF5.1, DOF3.2, DOF1.1, DOF5.6 and DOF5.3) form a short-range concentration gradient that peaks at protophloem sieve elements (PSE).

The protein resides in the nucleus. Functionally, transcription factor that binds specifically to a 5'-AA[AG]G-3' consensus core sequence. Binds to 5'-TAAAGT-3' motif in REV promoter to triggers its transcription, thus regulating adaxial-abaxial polarity and influencing leaf axial patterning in an auxin transport- and response-dependent manner (e.g. IAA6 and IAA19 genes expression). Probably involved in early processes for vascular development. The PEAR proteins (e.g. DOF2.4, DOF5.1, DOF3.2, DOF1.1, DOF5.6 and DOF5.3) activate gene expression that promotes radial growth of protophloem sieve elements. This chain is Dof zinc finger protein DOF5.1, found in Arabidopsis thaliana (Mouse-ear cress).